Reading from the N-terminus, the 138-residue chain is Putative pre-16S rRNA nuclease (138 aa).

This sequence belongs to the YqgF nuclease family.

It is found in the cytoplasm. In terms of biological role, could be a nuclease involved in processing of the 5'-end of pre-16S rRNA. In Carboxydothermus hydrogenoformans (strain ATCC BAA-161 / DSM 6008 / Z-2901), this protein is Putative pre-16S rRNA nuclease.